A 348-amino-acid chain; its full sequence is Glucose 1-dehydrogenase 2 (348 aa).

C39 contacts Zn(2+). Residue T41 participates in substrate binding. Zn(2+) is bound by residues H64 and E65. Substrate-binding residues include E110 and E146. Residue E146 coordinates Zn(2+). NADP(+)-binding positions include 178 to 181 (AGPV), 260 to 262 (LGV), and 289 to 291 (SVN). A substrate-binding site is contributed by N291.

Belongs to the zinc-containing alcohol dehydrogenase family. Glucose 1-dehydrogenase subfamily. The cofactor is Zn(2+).

It catalyses the reaction D-glucose + NAD(+) = D-glucono-1,5-lactone + NADH + H(+). It carries out the reaction D-glucose + NADP(+) = D-glucono-1,5-lactone + NADPH + H(+). In terms of biological role, catalyzes the NAD(P)(+)-dependent oxidation of D-glucose to D-gluconate via gluconolactone. Can utilize both NAD(+) and NADP(+) as electron acceptor. Is involved in the degradation of glucose through a non-phosphorylative variant of the Entner-Doudoroff pathway. The chain is Glucose 1-dehydrogenase 2 from Vulcanisaeta moutnovskia (strain 768-28).